Here is an 899-residue protein sequence, read N- to C-terminus: Androgen receptor (899 aa).

The modulating stretch occupies residues 1–537 (MEVQLGLGRV…PIDYYFPPQK (537 aa)). Residues 1–566 (MEVQLGLGRV…GSCKVFFKRA (566 aa)) form an interaction with ZNF318 region. Disordered regions lie at residues 35–146 (QNPG…LSLL) and 175–222 (QQQQ…LGGN). Residue Ser-61 is modified to Phosphoserine; by CDK9. Ser-75 carries the phosphoserine modification. Composition is skewed to low complexity over residues 94–103 (QPSQQQAASE) and 175–193 (QQQQ…QQQQ). The span at 210–222 (APSSSKDSYLGGN) shows a compositional bias: polar residues. Position 218 is a phosphotyrosine; by CSK (Tyr-218). A Phosphoserine modification is found at Ser-251. Phosphotyrosine; by CSK and TNK2 is present on Tyr-262. 4 positions are modified to phosphotyrosine; by CSK: Tyr-302, Tyr-341, Tyr-352, and Tyr-357. Position 358 is a phosphotyrosine; by CSK and TNK2 (Tyr-358). A Glycyl lysine isopeptide (Lys-Gly) (interchain with G-Cter in SUMO) cross-link involves residue Lys-381. A Phosphotyrosine; by CSK modification is found at Tyr-388. Residues 436 to 471 (EGQLYGPGGGGGSSSPSDAGPVAPYGYTRPPQGLTS) form a disordered region. Residue Lys-500 forms a Glycyl lysine isopeptide (Lys-Gly) (interchain with G-Cter in SUMO) linkage. Phosphotyrosine; by CSK is present on residues Tyr-514 and Tyr-531. An interaction with LPXN region spans residues 531–898 (YYFPPQKTCL…GKVKPIYFHT (368 aa)). Positions 538–611 (TCLICGDEAS…AGMTLGARKL (74 aa)) form a DNA-binding region, nuclear receptor. 2 NR C4-type zinc fingers span residues 539–559 (CLIC…CGSC) and 575–599 (CASR…LRKC). The interaction with HIPK3 stretch occupies residues 551–641 (YGALTCGSCK…TEDPSQKMTV (91 aa)). The interval 571 to 898 (QKYLCASRND…GKVKPIYFHT (328 aa)) is interaction with CCAR1. Positions 604–898 (MTLGARKLKK…GKVKPIYFHT (295 aa)) are interaction with KAT7. At Ser-630 the chain carries Phosphoserine. In terms of domain architecture, NR LBD spans 648-879 (ECQPIFLNVL…DFPEMMAEII (232 aa)). Residues Asn-685 and Arg-732 each contribute to the 17beta-hydroxy-5alpha-androstan-3-one site. Glycyl lysine isopeptide (Lys-Gly) (interchain with G-Cter in ubiquitin) cross-links involve residues Lys-825 and Lys-827. Thr-857 contacts 17beta-hydroxy-5alpha-androstan-3-one. Tyr-895 bears the Phosphotyrosine; by CSK mark.

It belongs to the nuclear hormone receptor family. NR3 subfamily. In terms of assembly, binds DNA as a homodimer. Part of a ternary complex containing AR, EFCAB6/DJBP and PARK7. Interacts with HIPK3 and NR0B2 in the presence of androgen. The ligand binding domain interacts with KAT7/HBO1 in the presence of dihydrotestosterone. Interacts with EFCAB6/DJBP, PQBP1, RANBP9, SPDEF, SRA1, TGFB1I1, ZNF318 and RREB1. The AR N-terminal poly-Gln region binds Ran resulting in enhancement of AR-mediated transactivation. Ran-binding decreases as the poly-Gln length increases. Interacts with ZMIZ1/ZIMP10 and ZMIZ2/ZMIP7 which both enhance its transactivation activity. Interacts with RBAK. Interacts via the ligand-binding domain with LXXLL and FXXLF motifs from NCOA1, NCOA2, NCOA3 and MAGEA11. Interacts (via nuclear receptor DNA binding domain and nuclear receptor ligand binding domain) with NCOA4. Interacts with HIP1 (via coiled coil domain). Interacts with SLC30A9 and RAD54L2/ARIP4. Interacts with MACROD1 (via macro domain). Interacts (via ligand-binding domain) with TRIM68. Interacts with TNK2. Interacts with USP26. Interacts with RNF6. Interacts (regulated by RNF6 probably through polyubiquitination) with RNF14; regulates AR transcriptional activity. Interacts with PRMT2 and TRIM24. Interacts with RACK1. Interacts with RANBP10; this interaction enhances hormone-induced AR transcriptional activity. Interacts with PRPF6 in a hormone-independent way; this interaction enhances hormone-induced AR transcriptional activity. Interacts with STK4/MST1. Interacts with ZIPK/DAPK3. Interacts with LPXN. Interacts with MAK. Part of a complex containing AR, MAK and NCOA3. Interacts with CRY1. Interacts with CCAR1 and GATA2. Interacts with BUD31. Interacts with ARID4A. Interacts with ARID4B. Interacts (via NR LBD domain) with ZBTB7A; the interaction is direct and androgen-dependent. Interacts with NCOR1. Interacts with NCOR2. Interacts with CRY2 in a ligand-dependent manner. Post-translationally, phosphorylated in prostate cancer cells in response to several growth factors including EGF. Phosphorylation is induced by c-Src kinase (CSK). Tyr-514 is one of the major phosphorylation sites and an increase in phosphorylation and Src kinase activity is associated with prostate cancer progression. Phosphorylation by TNK2 enhances the DNA-binding and transcriptional activity. Phosphorylation at Ser-61 by CDK9 regulates AR promoter selectivity and cell growth. Phosphorylation by PAK6 leads to AR-mediated transcription inhibition. In terms of processing, sumoylated on Lys-381 (major) and Lys-500. Ubiquitinated. Deubiquitinated by USP26. 'Lys-6' and 'Lys-27'-linked polyubiquitination by RNF6 modulates AR transcriptional activity and specificity. Palmitoylated by ZDHHC7 and ZDHHC21. Palmitoylation is required for plasma membrane targeting and for rapid intracellular signaling via ERK and AKT kinases and cAMP generation.

The protein localises to the nucleus. Its subcellular location is the cytoplasm. Its function is as follows. Steroid hormone receptors are ligand-activated transcription factors that regulate eukaryotic gene expression and affect cellular proliferation and differentiation in target tissues. Transcription factor activity is modulated by bound coactivator and corepressor proteins like ZBTB7A that recruits NCOR1 and NCOR2 to the androgen response elements/ARE on target genes, negatively regulating androgen receptor signaling and androgen-induced cell proliferation. Transcription activation is also down-regulated by NR0B2. Activated, but not phosphorylated, by HIPK3 and ZIPK/DAPK3. The polypeptide is Androgen receptor (Ar) (Mus musculus (Mouse)).